The following is a 252-amino-acid chain: Flagellar brake protein YcgR (252 aa).

A PilZ domain is found at 118 to 236; sequence QRREYFRVSI…EKGLQRAIFE (119 aa).

It belongs to the YcgR family. Monomer. Interacts with the flagellar basal bodies.

The protein localises to the bacterial flagellum basal body. Functionally, acts as a flagellar brake, regulating swimming and swarming in a bis-(3'-5') cyclic diguanylic acid (c-di-GMP)-dependent manner. Binds 1 c-di-GMP dimer per subunit. Increasing levels of c-di-GMP lead to decreased motility. This Yersinia pseudotuberculosis serotype I (strain IP32953) protein is Flagellar brake protein YcgR.